The chain runs to 610 residues: Transducer of Cdc42-dependent actin assembly protein 2 homolog (610 aa).

The F-BAR domain occupies 1–267 (MIPVSRFFTV…EVGKIDAEGD (267 aa)). The tract at residues 283-315 (APFEIEDLGDPKNCDSRTNDSADGSGGKLLKSS) is disordered. Positions 291–302 (GDPKNCDSRTND) are enriched in basic and acidic residues. In terms of domain architecture, REM-1 spans 352 to 429 (SKPAHVRLSC…IHNLKEFYAM (78 aa)). Positions 355–385 (AHVRLSCLRSKIRDMEKQLEQAIQGREGITR) form a coiled coil. Disordered stretches follow at residues 436–487 (EGQE…SSKN) and 499–519 (LISS…RRAE). Over residues 437–449 (GQERSFGGRDTPD) the composition is skewed to basic and acidic residues. Over residues 453–464 (SMSGSSTNQSSS) the composition is skewed to low complexity. The span at 475 to 487 (AGNSSSADDSSKN) shows a compositional bias: polar residues. Low complexity predominate over residues 501-513 (SSPKTSKSSTPTP). Residues 547–610 (ETAVTVTALF…VPTSYLQFPQ (64 aa)) enclose the SH3 domain.

This sequence belongs to the FNBP1 family. As to quaternary structure, interacts (via SH3 domain) with wsp-1 and abi-1. Interacts with cdc-42 and (via SH3 domain) with wve-1.

The protein resides in the cell junction. The protein localises to the cell membrane. Its subcellular location is the cytoplasmic vesicle. It localises to the cytoplasm. It is found in the recycling endosome. Its function is as follows. Plays a role in protein trafficking, actin organization and embryonic morphogenesis. Potentially acts as a cdc-42 effector. May play a role in egg laying. Together with toca-1, is required for protein trafficking regulating yolk protein clathrin-mediated endocytosis by oocytes during oogenesis and retrograde recycling and the sorting of recycling endosome cargo proteins such as mig-14. Also, together with toca-2, controls the distribution of actin at cell junctions. The polypeptide is Transducer of Cdc42-dependent actin assembly protein 2 homolog (Caenorhabditis elegans).